A 354-amino-acid chain; its full sequence is Mating-type protein MAT-1 (354 aa).

The segment at residues 60–117 (KAKKALNAFVGFRCYYIAIPAFKQWPMKKLSNLISLLWDRDPNKSLWSLMAKAWSNIR) is a DNA-binding region (alpha box).

It belongs to the MATALPHA1 family.

The protein localises to the nucleus. Functionally, mating type proteins are sequence specific DNA-binding proteins that act as master switches in fungal differentiation by controlling gene expression in a cell type-specific fashion. Transcriptional activator that induces the transcription of alpha-specific genes. The chain is Mating-type protein MAT-1 (MAT1) from Cochliobolus cymbopogonis (Curvularia cymbopogonis).